The following is a 271-amino-acid chain: Protein FAM110D (271 aa).

Residues 1–13 (MLLSSPTTPSRGR) are compositionally biased toward polar residues. Disordered stretches follow at residues 1–84 (MLLS…PDSL), 118–149 (DAAP…TGKR), and 186–242 (PQSW…GRPT).

The protein belongs to the FAM110 family.

The protein is Protein FAM110D of Mus musculus (Mouse).